The following is a 370-amino-acid chain: Prolactin-releasing peptide receptor (370 aa).

The Extracellular portion of the chain corresponds to 1 to 62 (MASSTTRGPR…LQLVHQLKGL (62 aa)). 2 N-linked (GlcNAc...) asparagine glycosylation sites follow: Asn-27 and Asn-36. A helical membrane pass occupies residues 63–83 (IVLLYSVVVVVGLVGNCLLVL). Topologically, residues 84–101 (VIARVRRLHNVTNFLIGN) are cytoplasmic. Residues 102-122 (LALSDVLMCTACVPLTLAYAF) traverse the membrane as a helical segment. Topologically, residues 123–126 (EPRG) are extracellular. The chain crosses the membrane as a helical span at residues 127-147 (WVFGGGLCHLVFFLQPVTVYV). Cysteines 134 and 211 form a disulfide. Over 148-175 (SVFTLTTIAVDRYVVLVHPLRRRISLRL) the chain is Cytoplasmic. A helical transmembrane segment spans residues 176 to 196 (SAYAVLAIWALSAVLALPAAV). Residues 197–225 (HTYHVELKPHDVRLCEEFWGSQERQRQLY) lie on the Extracellular side of the membrane. A helical transmembrane segment spans residues 226-246 (AWGLLLVTYLLPLLVILLSYV). Topologically, residues 247–276 (RVSVKLRNRVVPGCVTQSQADWDRARRRRT) are cytoplasmic. The helical transmembrane segment at 277-297 (FCLLVVIVVVFAVCWLPLHVF) threads the bilayer. The Extracellular portion of the chain corresponds to 298–317 (NLLRDLDPHAIDPYAFGLVQ). A helical transmembrane segment spans residues 318-338 (LLCHWLAMSSACYNPFIYAWL). Over 339 to 369 (HDSFREELRKLLVAWPRKIAPHGQNMTVSVV) the chain is Cytoplasmic. The interval 365–370 (TVSVVI) is required for interaction with GRIP1, GRIP2 and PICK1.

It belongs to the G-protein coupled receptor 1 family. As to quaternary structure, interacts through its C-terminal region with the PDZ domain-containing proteins GRIP1, GRIP2 and PICK1. Interacts with PDZ domains 4 and 5 of GRIP1 and with the PDZ domain of PICK1. In terms of tissue distribution, only detected in the pituitary gland and in all cell types of pituitary adenomas.

The protein resides in the cell membrane. Its function is as follows. Receptor for prolactin-releasing peptide (PrRP). Implicated in lactation, regulation of food intake and pain-signal processing. This is Prolactin-releasing peptide receptor (PRLHR) from Homo sapiens (Human).